Here is a 189-residue protein sequence, read N- to C-terminus: UPF0301 protein PA14_05290 (189 aa).

The protein belongs to the UPF0301 (AlgH) family.

In Pseudomonas aeruginosa (strain UCBPP-PA14), this protein is UPF0301 protein PA14_05290.